The sequence spans 598 residues: Chaperone protein DnaK (598 aa).

Threonine 180 bears the Phosphothreonine; by autocatalysis mark.

Belongs to the heat shock protein 70 family.

In terms of biological role, acts as a chaperone. In Thermosipho africanus (strain TCF52B), this protein is Chaperone protein DnaK.